The chain runs to 228 residues: L-ribulose-5-phosphate 4-epimerase UlaF (228 aa).

Residues Gly26 to Asn27, Ser43 to Gly44, and Ser72 to Ser73 each bind substrate. Zn(2+)-binding residues include Asp74, His93, and His95. Asp118 acts as the Proton donor/acceptor in catalysis. Position 167 (His167) interacts with Zn(2+). Tyr225 acts as the Proton donor/acceptor in catalysis.

This sequence belongs to the aldolase class II family. AraD/FucA subfamily. It depends on Zn(2+) as a cofactor.

It catalyses the reaction L-ribulose 5-phosphate = D-xylulose 5-phosphate. It functions in the pathway cofactor degradation; L-ascorbate degradation; D-xylulose 5-phosphate from L-ascorbate: step 4/4. Functionally, catalyzes the isomerization of L-ribulose 5-phosphate to D-xylulose 5-phosphate. Is involved in the anaerobic L-ascorbate utilization. This Escherichia coli O8 (strain IAI1) protein is L-ribulose-5-phosphate 4-epimerase UlaF.